Here is a 442-residue protein sequence, read N- to C-terminus: Terpene cyclase aneC (442 aa).

Residues aspartate 196, asparagine 327, serine 331, and glutamate 335 each coordinate Mg(2+). 2 residues coordinate (2E,6E)-farnesyl diphosphate: arginine 419 and tyrosine 420.

Belongs to the terpene synthase family. Homodimer. Mg(2+) is required as a cofactor.

The enzyme catalyses (2E,6E)-farnesyl diphosphate = dauca-4,7-diene + diphosphate. It functions in the pathway secondary metabolite biosynthesis. In terms of biological role, terpene cyclase; part of the gene cluster that mediates the biosynthesis of aculenes, a unique type of norsesquiterpenes that contain a nordaucane skeleton linked to an L-proline moiety and are of mixed biosynthetic origin. The pathway begins with the synthesis of dauca-4,7-diene by the terpene cyclase aneC using farnesyl pyrophosphate (FPP) as substrate. The cytochrome P450 monooxygenase aneF then performs the initial oxidation at C-12 of dauca-4,7-diene to yield asperaculane D. Asperaculane D is substrate of the cytochrome P450 monooxygenase aneD for C-10 hydroxylation to yield asperaculane E. The cytochrome P450 monooxygenase aneG then converts asperaculane E into aculene D via C-2 oxidation. The monomodular nonribosomal peptide synthtase aneB adenylates L-proline and the thiohydrolase aneE transfers this activated L-proline derivative to aculenes D and C to produce respectively aculenes B and A. The dioxygenase aneA converts aculene D into aculene C, and aculene B into aculene A by introducing the 5,6-alkene moiety. Asperculanes A, B, C and F, as well as 14-prolyl asperculane C, might be shunt products of the pathway. The protein is Terpene cyclase aneC of Aspergillus aculeatus (strain ATCC 16872 / CBS 172.66 / WB 5094).